We begin with the raw amino-acid sequence, 151 residues long: Small ribosomal subunit protein uS15 (151 aa).

This sequence belongs to the universal ribosomal protein uS15 family.

This Wuchereria bancrofti protein is Small ribosomal subunit protein uS15 (RPS13).